A 1013-amino-acid polypeptide reads, in one-letter code: Poly [ADP-ribose] polymerase 1 (1013 aa).

PARP-type zinc fingers lie at residues 10–92 and 113–203; these read YKAE…ESGG and FAVE…PAVK. Zn(2+) is bound by residues Cys-22, Cys-25, His-54, Cys-57, Cys-125, Cys-128, His-159, and Cys-162. A disordered region spans residues 202-228; it reads VKSEGKRKADEVDGGVSKKQKKEDEKL. The Nuclear localization signal signature appears at 207-209; the sequence is KRK. The PADR1 zinc-binding domain occupies 219-353; the sequence is KKQKKEDEKL…FKRQDRVFPK (135 aa). The segment at 284 to 326 is zinc ribbon; it reads GSLKPCETCKGQLVFKSDAYYCTGDISAWTKCVFKTQTPDRKD. The Zn(2+) site is built by Cys-289, Cys-292, Cys-305, and Cys-315. The interval 353–385 is disordered; sequence KDAPPAAATPSSGSTTSAATSVSSASKNLTEAP. Low complexity predominate over residues 356-378; that stretch reads PPAAATPSSGSTTSAATSVSSAS. The tract at residues 365 to 523 is automodification domain; sequence GSTTSAATSV…EGGSKSKKMK (159 aa). Residues 385-461 form the BRCT domain; that stretch reads PADKPLTGMK…RVVADDFLTD (77 aa). Glu-413, Glu-435, Glu-444, Glu-445, Glu-464, Glu-471, Glu-484, and Glu-488 each carry polyADP-ribosyl glutamic acid. Positions 494–507 are enriched in low complexity; that stretch reads AATKSTGAHSSKST. Residues 494 to 522 are disordered; that stretch reads AATKSTGAHSSKSTGKVKEEEGGSKSKKM. A polyADP-ribosyl glutamic acid mark is found at Glu-512 and Glu-513. A WGR domain is found at 541-637; sequence CAHVLEQNGK…SNFTKYPNKF (97 aa). One can recognise a PARP alpha-helical domain in the interval 661-778; the sequence is KSQLEKPVQD…DIEVAYSLLR (118 aa). The PARP catalytic domain maps to 787–1013; the sequence is DPIDINYEKL…IRFNYQTSLW (227 aa). NAD(+) contacts are provided by residues 861 to 863, Gly-870, Arg-877, and Ser-903; that span reads HGS. Glu-987 (for poly [ADP-ribose] polymerase activity) is an active-site residue.

It belongs to the ARTD/PARP family. In terms of assembly, homodimer; PARP-type zinc-fingers from separate parp1 molecules form a dimer module that specifically recognizes DNA strand breaks. Poly-ADP-ribosylated on serine, glutamate and aspartate residues by autocatalysis. Auto-ADP-ribosylation on serine takes place following interaction with HPF1. Auto poly-ADP-ribosylation on serine residues promotes its dissociation from chromatin.

The protein resides in the chromosome. It is found in the nucleus. Its subcellular location is the nucleolus. The protein localises to the cytoplasm. It localises to the cytosol. The catalysed reaction is NAD(+) + (ADP-D-ribosyl)n-acceptor = nicotinamide + (ADP-D-ribosyl)n+1-acceptor + H(+).. It carries out the reaction L-seryl-[protein] + NAD(+) = O-(ADP-D-ribosyl)-L-seryl-[protein] + nicotinamide + H(+). It catalyses the reaction L-aspartyl-[protein] + NAD(+) = 4-O-(ADP-D-ribosyl)-L-aspartyl-[protein] + nicotinamide. The enzyme catalyses L-glutamyl-[protein] + NAD(+) = 5-O-(ADP-D-ribosyl)-L-glutamyl-[protein] + nicotinamide. The catalysed reaction is L-tyrosyl-[protein] + NAD(+) = O-(ADP-D-ribosyl)-L-tyrosyl-[protein] + nicotinamide + H(+). It carries out the reaction L-histidyl-[protein] + NAD(+) = N(tele)-(ADP-D-ribosyl)-L-histidyl-[protein] + nicotinamide + H(+). With respect to regulation, ADP-ribosyltransferase activity is regulated via an allosteric activation mechanism. In absence of activation signal, parp1 is autoinhibited by the PARP alpha-helical domain (also named HD region), which prevents effective NAD(+)-binding. Activity is highly stimulated by signals, such as DNA strand breaks. Binding to damaged DNA unfolds the PARP alpha-helical domain, relieving autoinhibition. Poly-ADP-ribosyltransferase activity is tightly regulated and parp1 is removed from damaged chromatin following initial poly-ADP-ribosylation of chromatin to avoid prolonged residence (trapping) that has cytotoxic consequences. A number of factors or post-translational modifications (auto-poly-ADP-ribosylation) promote parp1 removal from chromatin. Its function is as follows. Poly-ADP-ribosyltransferase that mediates poly-ADP-ribosylation of proteins and plays a key role in DNA repair. Mediates glutamate, aspartate, serine, histidine or tyrosine ADP-ribosylation of proteins: the ADP-D-ribosyl group of NAD(+) is transferred to the acceptor carboxyl group of target residues and further ADP-ribosyl groups are transferred to the 2'-position of the terminal adenosine moiety, building up a polymer with an average chain length of 20-30 units. Serine ADP-ribosylation of proteins constitutes the primary form of ADP-ribosylation of proteins in response to DNA damage. Specificity for the different amino acids is conferred by interacting factors, such as hpf1 and nmnat1. Following interaction with hpf1, catalyzes serine ADP-ribosylation of target proteins; hpf1 confers serine specificity by completing the parp1 active site. Also catalyzes tyrosine ADP-ribosylation of target proteins following interaction with hpf1. Following interaction with nmnat1, catalyzes glutamate and aspartate ADP-ribosylation of target proteins; nmnat1 confers glutamate and aspartate specificity. Parp1 initiates the repair of DNA breaks: recognizes and binds DNA breaks within chromatin and recruits hpf1, licensing serine ADP-ribosylation of target proteins, such as histones (H2BS6ADPr and H3S10ADPr), thereby promoting decompaction of chromatin and the recruitment of repair factors leading to the reparation of DNA strand breaks. In addition to base excision repair (BER) pathway, also involved in double-strand breaks (DSBs) repair. Mediates the poly-ADP-ribosylation of a number of proteins. In addition to proteins, also able to ADP-ribosylate DNA: catalyzes ADP-ribosylation of DNA strand break termini containing terminal phosphates and a 2'-OH group in single- and double-stranded DNA, respectively. Parp1-mediated DNA repair in neurons plays a role in sleep: senses DNA damage in neurons and promotes sleep, facilitating efficient DNA repair. In addition to DNA repair, also involved in other processes, such as transcription regulation, programmed cell death, membrane repair, adipogenesis and innate immunity. Acts as a repressor of transcription: binds to nucleosomes and modulates chromatin structure in a manner similar to histone H1, thereby altering RNA polymerase II. Acts both as a positive and negative regulator of transcription elongation, depending on the context. Poly-ADP-ribose chains generated by parp1 also play a role in poly-ADP-ribose-dependent cell death, a process named parthanatos. Also acts as a negative regulator of the cGAS-STING pathway by mediating poly-ADP-ribosylation and inactivation of cgas. Acts as a negative regulator of adipogenesis by catalyzing poly ADP-ribosylation of histone H2B on 'Glu-35' (H2BE35ADPr). In Danio rerio (Zebrafish), this protein is Poly [ADP-ribose] polymerase 1.